The primary structure comprises 624 residues: Kelch-like ECH-associated protein 1 (624 aa).

Cys-38 carries the S-(2-succinyl)cysteine modification. One can recognise a BTB domain in the interval 77–149 (CDVTLQVKYE…AYTASISVGE (73 aa)). Arg-135 participates in a covalent cross-link: N5-[4-(S-L-cysteinyl)-5-methyl-1H-imidazol-2-yl]-L-ornithine (Arg-Cys) (interchain with C-151 in KEAP1). Cys-151 carries the post-translational modification S-(2,3-dicarboxypropyl)cysteine; alternate. An S-(2-succinyl)cysteine; alternate modification is found at Cys-151. Cys-151 is modified (S-nitrosocysteine; alternate). An N5-[4-(S-L-cysteinyl)-5-methyl-1H-imidazol-2-yl]-L-ornithine (Cys-Arg) (interchain with R-135 in KEAP1) cross-link involves residue Cys-151. One can recognise a BACK domain in the interval 184–286 (AIGIANFAEQ…TPRFLQTQLQ (103 aa)). Cys-241 carries the post-translational modification S-(2-succinyl)cysteine. Cys-257 and Cys-273 each carry S-(2,3-dicarboxypropyl)cysteine. Cys-288 is subject to S-(2,3-dicarboxypropyl)cysteine; alternate. Cys-288 is subject to S-(2-succinyl)cysteine; alternate. Position 319 is an S-(2-succinyl)cysteine (Cys-319). 6 Kelch repeats span residues 327 to 372 (LIYT…VVGG), 373 to 423 (LLYA…VIDG), 424 to 470 (HIYA…VLNR), 471 to 517 (LLYA…VLHN), 519 to 564 (IYAA…VHQG), and 565 to 611 (KIYV…VTME). The residue at position 434 (Cys-434) is an S-cGMP-cysteine. Cys-613 carries the S-(2-succinyl)cysteine modification.

This sequence belongs to the KEAP1 family. As to quaternary structure, component of the BCR(KEAP1) E3 ubiquitin ligase complex, at least composed of 2 molecules of CUL3, 2 molecules of KEAP1, and RBX1. Interacts with NFE2L2/NRF2; the interaction is direct. Forms a ternary complex with NFE2L2/NRF2 and PGAM5. Interacts with (phosphorylated) SQSTM1/p62; the interaction is direct and inactivates the BCR(KEAP1) complex by sequestering it in inclusion bodies, promoting its degradation. Interacts with NFE2L1. Interacts with BPTF and PTMA. Interacts with MAP1LC3B. Interacts indirectly with ENC1. Interacts with SESN1 and SESN2. Interacts with HSP90AA1 and HSP90AB1. Interacts with PGCKA1; this interaction prevents the ubiquitination of KEAP1 by TRIM25, thus protecting KEAP1 from degradation. Post-translationally, non-enzymatic covalent modifications of reactive cysteines by electrophile metabolites inactivate the BCR(KEAP1) complex. Accumulation of fumarate promotes the formation of cysteine S-succination (S-(2-succinyl)cysteine), leading to inactivate the BCR(KEAP1) complex and promote NFE2L2/NRF2 nuclear accumulation and activation. Nitric oxide-dependent 8-Nitro-cGMP formation promotes cysteine guanylation (S-cGMP-cysteine), leading to NFE2L2/NRF2 nuclear accumulation and activation. Itaconate, an anti-inflammatory metabolite generated in response to lipopolysaccharide, alkylates cysteines, activating NFE2L2/NRF2. Methylglyoxal, a reactive metabolite that accumulates when the glycolytic enzyme PGK1 is inhibited, promotes formation of a methylimidazole cross-link between proximal Cys-151 and Arg-135 on another KEAP1 molecule, resulting in an inactive dimer that inactivates the BCR(KEAP1) complex. In terms of processing, degraded via a proteasomal-independent process during selective autophagy: interaction with phosphorylated SQSTM1/p62 sequesters KEAP1 in inclusion bodies, leading to its degradation. Auto-ubiquitinated by the BCR(KEAP1) complex. Quinone-induced oxidative stress, but not sulforaphane, increases its ubiquitination. Ubiquitination and subsequent degradation is most pronounced following prolonged exposure of cells to oxidative stress, particularly in glutathione-deficient cells that are highly susceptible to oxidative stress. Deubiquitinated by USP25; leading to stabilization. Ubiquitinated by TRIM25; leading to degradation upon ER stress.

It is found in the cytoplasm. Its subcellular location is the nucleus. The protein operates within protein modification; protein ubiquitination. With respect to regulation, ubiquitin ligase activity of the BCR(KEAP1) complex is inhibited by oxidative stress and electrophile metabolites such as sulforaphane. Electrophile metabolites react with reactive cysteine residues in KEAP1 and trigger non-enzymatic covalent modifications of these cysteine residues, leading to inactivate the ubiquitin ligase activity of the BCR(KEAP1) complex. Selective autophagy also inactivates the BCR(KEAP1) complex via interaction between KEAP1 and SQSTM1/p62, which sequesters the complex in inclusion bodies and promotes its degradation. Functionally, substrate-specific adapter of a BCR (BTB-CUL3-RBX1) E3 ubiquitin ligase complex that regulates the response to oxidative stress by targeting NFE2L2/NRF2 for ubiquitination. KEAP1 acts as a key sensor of oxidative and electrophilic stress: in normal conditions, the BCR(KEAP1) complex mediates ubiquitination and degradation of NFE2L2/NRF2, a transcription factor regulating expression of many cytoprotective genes. In response to oxidative stress, different electrophile metabolites trigger non-enzymatic covalent modifications of highly reactive cysteine residues in KEAP1, leading to inactivate the ubiquitin ligase activity of the BCR(KEAP1) complex, promoting NFE2L2/NRF2 nuclear accumulation and expression of phase II detoxifying enzymes. In response to selective autophagy, KEAP1 is sequestered in inclusion bodies following its interaction with SQSTM1/p62, leading to inactivation of the BCR(KEAP1) complex and activation of NFE2L2/NRF2. The BCR(KEAP1) complex also mediates ubiquitination of SQSTM1/p62, increasing SQSTM1/p62 sequestering activity and degradation. The BCR(KEAP1) complex also targets BPTF and PGAM5 for ubiquitination and degradation by the proteasome. This chain is Kelch-like ECH-associated protein 1, found in Mus musculus (Mouse).